The chain runs to 27 residues: Chitinase 47 kDa (27 aa).

A GH18 domain is found at 3–27 (SKVVGYFTEWGTYDRKYYVKNIEXS).

It belongs to the glycosyl hydrolase 18 family. Chitinase class II subfamily. As to quaternary structure, homodimer.

The enzyme catalyses Random endo-hydrolysis of N-acetyl-beta-D-glucosaminide (1-&gt;4)-beta-linkages in chitin and chitodextrins.. In terms of biological role, able to cleave chitin oligomers from N=3 to 6. The polypeptide is Chitinase 47 kDa (Streptomyces olivaceoviridis (Streptomyces corchorusii)).